We begin with the raw amino-acid sequence, 680 residues long: Zinc finger protein 334 (680 aa).

A KRAB domain is found at 10–81 (VSFQDLTVNF…EEFSNQNYPD (72 aa)). 14 C2H2-type zinc fingers span residues 237-259 (NECN…QRIH), 265-287 (YVCS…RRIH), 293-315 (YECS…QKIH), 321-343 (YECN…FRSH), 349-371 (YECK…QRTH), 377-399 (NECK…QRIH), 405-427 (YECS…RRSH), 433-455 (YECS…QITH), 461-483 (YECN…QRTH), 544-566 (YECN…QRTH), 572-594 (YECN…QRTH), 600-622 (YECN…RRIH), 628-650 (YECN…QKIH), and 656-678 (YECN…QKSH).

The protein belongs to the krueppel C2H2-type zinc-finger protein family.

Its subcellular location is the nucleus. Its function is as follows. May be involved in transcriptional regulation. This Homo sapiens (Human) protein is Zinc finger protein 334 (ZNF334).